The primary structure comprises 504 residues: Arrestin-related trafficking adapter 10 (504 aa).

This sequence belongs to the ART10 family.

The protein resides in the cytoplasm. May regulate endocytosis by recruiting RSP5 ubiquitin ligase activity to specific plasma membrane proteins in response to extracellular stimuli. The sequence is that of Arrestin-related trafficking adapter 10 (ART10) from Candida glabrata (strain ATCC 2001 / BCRC 20586 / JCM 3761 / NBRC 0622 / NRRL Y-65 / CBS 138) (Yeast).